The following is a 522-amino-acid chain: Target of rapamycin complex 2 subunit MAPKAP1 (522 aa).

A2 carries the N-acetylalanine modification. Residues 2 to 184 (AFLDNPTIIL…KKIDVYLPLH (183 aa)) form an interaction with MAP3K2 region. Residues 2-267 (AFLDNPTIIL…GFSTLALVEK (266 aa)) are interaction with NBN. The disordered stretch occupies residues 38 to 59 (LEKTHPPSVPGDSGSEVQGSSG). At T86 the chain carries Phosphothreonine; by PKB/AKT1 and RPS6KB1. Phosphoserine; by PKC is present on S128. The CRIM domain maps to 139-267 (QSILSVRLEQ…GFSTLALVEK (129 aa)). Residues S186, S315, and S356 each carry the phosphoserine modification. The tract at residues 279 to 353 (LFVRINAAHG…QNAWEFCLVR (75 aa)) is SIN1-type RBD. Residues 382–487 (HYKSFKVSMI…IVLKVNYILE (106 aa)) enclose the SIN1-type PH domain. Residue R393 coordinates a 1,2-diacyl-sn-glycero-3-phospho-(1D-myo-inositol-3,4,5-trisphosphate). Phosphothreonine; by RPS6KB1 is present on T398. Residues K428 and K464 each coordinate a 1,2-diacyl-sn-glycero-3-phospho-(1D-myo-inositol-3,4,5-trisphosphate). The interaction with ATF2 stretch occupies residues 468-522 (FESDAATVSEIVLKVNYILESRASTARADYLAQKQRKLNRRTSFSFQKEKKSGQQ). S510 bears the Phosphoserine mark.

It belongs to the SIN1 family. In terms of assembly, component of the mechanistic target of rapamycin complex 2 (mTORC2), consisting in two heterotretramers composed of MTOR, MLST8, RICTOR and MAPKAP1/SIN1. The mTORC2 core complex associates with PRR5/PROTOR1 and/or PRR5L/PROTOR2. Contrary to mTORC1, mTORC2 does not bind to and is not sensitive to FKBP12-rapamycin. Interacts with MAP3K2. Interacts with ATF2. Interacts with MAPK8. Interacts with GTP-bound HRAS and KRAS; inhibiting their activity. Interacts with IFNAR2. Post-translationally, phosphorylation at Ser-128 by PKC promotes relocalization to the perinuclear region, where the mTORC2 complex specifically mediates phosphorylation of SGK1. Phosphorylated at Thr-86 by AKT1 or RPS6KB1 in the presence of growth factors; the effect of this phosphorylation is however unclear. According to two studies, phosphorylation at Thr-86 by AKT1 is part of a positive feedback loop that increases mTORC2 activation. According to another study, phosphorylation at Thr-86 and Thr-398 by RPS6KB1 promotes dissociation from the mTORC2 complex, leading to inhibit mTORC2 signaling. Uniquitously expressed, with highest levels in testis, kidney and liver. Present in renal tubule cells (at protein level).

The protein localises to the cell membrane. Its subcellular location is the endoplasmic reticulum membrane. The protein resides in the early endosome membrane. It localises to the late endosome membrane. It is found in the lysosome membrane. The protein localises to the golgi apparatus membrane. Its subcellular location is the mitochondrion outer membrane. The protein resides in the cytoplasm. It localises to the perinuclear region. It is found in the nucleus. With respect to regulation, phosphatidylinositol 3,4,5-trisphosphate (PI(3,4,5)P3) promotes MTOR activation by relieving MAPKAP1/SIN1-mediated inhibition of MTOR that takes place in absence of PI(3,4,5)P3. Its function is as follows. Component of the mechanistic target of rapamycin complex 2 (mTORC2), which transduces signals from growth factors to pathways involved in proliferation, cytoskeletal organization, lipogenesis and anabolic output. In response to growth factors, mTORC2 phosphorylates and activates AGC protein kinase family members, including AKT (AKT1, AKT2 and AKT3), PKC (PRKCA, PRKCB and PRKCE) and SGK1. In contrast to mTORC1, mTORC2 is nutrient-insensitive. Within the mTORC2 complex, MAPKAP1/SIN1 acts as a substrate adapter which recognizes and binds AGC protein kinase family members for phosphorylation by MTOR. mTORC2 plays a critical role in AKT1 activation by mediating phosphorylation of different sites depending on the context, such as 'Thr-450', 'Ser-473', 'Ser-477' or 'Thr-479', facilitating the phosphorylation of the activation loop of AKT1 on 'Thr-308' by PDPK1/PDK1 which is a prerequisite for full activation. mTORC2 catalyzes the phosphorylation of SGK1 at 'Ser-422' and of PRKCA on 'Ser-657'. The mTORC2 complex also phosphorylates various proteins involved in insulin signaling, such as FBXW8 and IGF2BP1. mTORC2 acts upstream of Rho GTPases to regulate the actin cytoskeleton, probably by activating one or more Rho-type guanine nucleotide exchange factors. mTORC2 promotes the serum-induced formation of stress-fibers or F-actin. MAPKAP1 inhibits MAP3K2 by preventing its dimerization and autophosphorylation. Inhibits HRAS and KRAS independently of mTORC2 complex. Enhances osmotic stress-induced phosphorylation of ATF2 and ATF2-mediated transcription. Involved in ciliogenesis, regulates cilia length through its interaction with CCDC28B independently of mTORC2 complex. The chain is Target of rapamycin complex 2 subunit MAPKAP1 from Mus musculus (Mouse).